Here is a 404-residue protein sequence, read N- to C-terminus: Argininosuccinate synthase (404 aa).

Residues 12 to 20 and alanine 39 each bind ATP; that span reads AYSGGLDTS. L-citrulline contacts are provided by tyrosine 91 and serine 96. Position 121 (glycine 121) interacts with ATP. L-aspartate-binding residues include threonine 123, asparagine 127, and aspartate 128. Asparagine 127 contributes to the L-citrulline binding site. The L-citrulline site is built by arginine 131, serine 180, serine 189, glutamate 265, and tyrosine 277.

It belongs to the argininosuccinate synthase family. Type 1 subfamily. In terms of assembly, homotetramer.

The protein resides in the cytoplasm. The enzyme catalyses L-citrulline + L-aspartate + ATP = 2-(N(omega)-L-arginino)succinate + AMP + diphosphate + H(+). It participates in amino-acid biosynthesis; L-arginine biosynthesis; L-arginine from L-ornithine and carbamoyl phosphate: step 2/3. The sequence is that of Argininosuccinate synthase from Vibrio parahaemolyticus serotype O3:K6 (strain RIMD 2210633).